The chain runs to 304 residues: uncharacterized protein (304 aa).

The tract at residues 1 to 183 (MTAPNEPGAL…ARVQLSARRS (183 aa)) is disordered. Low complexity predominate over residues 132 to 166 (PTPRAPQRNPAPARPAEGGAGSRGDSAAGSSGGRS). A run of 2 helical transmembrane segments spans residues 206–226 (LLLSVALFFVWMITVAFLYLV) and 265–285 (FLIGLVNIVLMTALATIGAFV).

It to M.leprae ML0007.

The protein resides in the cell membrane. This is an uncharacterized protein from Mycobacterium tuberculosis (strain ATCC 25618 / H37Rv).